The sequence spans 510 residues: Glycosyl hydrolase YngK (510 aa).

Positions 1 to 30 (MKVCQKSIVRFLVSLIIGTFVISVPFMANA) are cleaved as a signal peptide.

Belongs to the glycosyl hydrolase-like 10 (GHL10) family.

This Bacillus subtilis (strain 168) protein is Glycosyl hydrolase YngK (yngK).